We begin with the raw amino-acid sequence, 104 residues long: Fusaric acid biosynthesis protein 2 (104 aa).

Belongs to the YciI family.

It functions in the pathway mycotoxin biosynthesis. Functionally, part of the gene cluster that mediates the biosynthesis of fusaric acid, a mycotoxin with low to moderate toxicity to animals and humans, but with high phytotoxic properties. L-aspartate is suggested as fusaric acid amino acid precursor that is activated and further processed to O-acetyl-L-homoserine by cluster enzymes aspartate kinase FUB3 and homoserine O-acetyltransferase FUB5, as well as enzymes of the primary metabolism. The polyketide synthase (PKS) FUB1 generates the triketide trans-2-hexenal which is presumptively released by the hydrolase FUB4 and linked to the NRPS-bound amino acid precursor by NAD(P)-dependent dehydrogenase FUB6. FUB1, FUB4, and the non-canonical NRPS Fub8 may form an enzyme complex. Further processing of the NRPS-bound intermediate might be carried out by FUB6 and the sulfhydrylase FUB7, enabling a spontaneous electrocyclization to close the carbon backbone of fusaric acid. Dihydrofusaric acid is likely to be released via reduction by the thioester reductase (TR) domain of FUB8 whereupon the final oxidation to fusaric acid may (also) be performed by the FMN-dependent dehydrogenase FUB9. In Gibberella fujikuroi (strain CBS 195.34 / IMI 58289 / NRRL A-6831) (Bakanae and foot rot disease fungus), this protein is Fusaric acid biosynthesis protein 2.